The primary structure comprises 404 residues: Zinc finger CCCH domain-containing protein 3 (404 aa).

5 C3H1-type zinc fingers span residues 47 to 75 (RPGERDCQFYLRTGLCGYGSSCRYNHPTH), 90 to 118 (RIGQPDCEYFLKTGACKYGPTCKYHHPKD), 135 to 163 (RLGEKPCPYYLRTGTCRFGVACKFHHPQP), 261 to 289 (SSDQPECRFFMNTGTCKYGDDCKYSHPGV), and 307 to 335 (RPGQPACGNFRSYGFCKFGPNCKFDHPML). The segment covering 350-374 (FASPVTTHQRISPTPNRSDSKSLSN) has biased composition (polar residues). The interval 350–404 (FASPVTTHQRISPTPNRSDSKSLSNGKPDVKKESSETEKPDNGEVQDLSEDASSP) is disordered. A compositionally biased stretch (basic and acidic residues) spans 377 to 391 (PDVKKESSETEKPDN).

It is found in the nucleus. Its function is as follows. Possesses RNA-binding and ribonuclease activities in vitro. This Arabidopsis thaliana (Mouse-ear cress) protein is Zinc finger CCCH domain-containing protein 3.